The primary structure comprises 557 residues: Low affinity inorganic phosphate transporter 8 (557 aa).

The Cytoplasmic segment spans residues 1–20 (MATSHGVLRSLDNAKTQSYH). The helical transmembrane segment at 21 to 41 (YLAIVIAGMGFFTDAYDLFCI) threads the bilayer. The Extracellular portion of the chain corresponds to 42–70 (TAVTKLIGRLYYSDPTNHSPGILPTNVNN). The helical transmembrane segment at 71-91 (AITGVALCGTLAGQLFFGWLG) threads the bilayer. The Cytoplasmic portion of the chain corresponds to 92-98 (DKLGRKK). Residues 99-119 (VYGITLTTMVGFALLSGLSFG) traverse the membrane as a helical segment. Residues 120–130 (STPKTVVTSLC) lie on the Extracellular side of the membrane. The helical transmembrane segment at 131 to 151 (FFRFWLGFGIGGDYPLSAVIM) threads the bilayer. Residues 152–162 (SEYANQKTRGS) lie on the Cytoplasmic side of the membrane. Residues 163–183 (FIAAVFAMQGVGILVAGGVAM) form a helical membrane-spanning segment. The Extracellular portion of the chain corresponds to 184–210 (FVSKLFLLYFPAPDFETDAVLSTQPEG). The helical transmembrane segment at 211 to 231 (DFVWRIVLMFGAVPAALTYYW) threads the bilayer. Over 232-294 (RMKMPETARY…LFSSEFLNRH (63 aa)) the chain is Cytoplasmic. A helical membrane pass occupies residues 295–315 (GLHLLGTTSTWFLLDIAFYSL). The Extracellular portion of the chain corresponds to 316-346 (QLTQKDIYPTSGLVYKASKMNAIEEVFQLSR). A helical transmembrane segment spans residues 347–367 (AMFAVALIATVPGYWCTVFLI). The Cytoplasmic segment spans residues 368–369 (EK). The chain crosses the membrane as a helical span at residues 370-390 (IGRFRIQLIGFLVMSVCMWFL). Over 391–414 (GHNYRSFRGEESACKNGSKYSFCN) the chain is Extracellular. Asn406 is a glycosylation site (N-linked (GlcNAc...) asparagine). A helical membrane pass occupies residues 415-435 (GNPVMFAILFGLTLFFANFGP). At 436–457 (NSTTFIVPAELFPARLRSTCHG) the chain is on the cytoplasmic side. A helical transmembrane segment spans residues 458–478 (ISAAAGKSGAIVGAFGVQSYI). Residues 479–490 (GNSHDKSKGTKQ) are Extracellular-facing. A helical transmembrane segment spans residues 491 to 511 (AIMALAVVNLLGFFFTFLVPE). Topologically, residues 512–557 (TQGRSLEEISGEEKDFQGNNADEEISGERNGTRNASVDKSPETSMV) are cytoplasmic. Positions 519–557 (EISGEEKDFQGNNADEEISGERNGTRNASVDKSPETSMV) are disordered. Residues 543 to 557 (TRNASVDKSPETSMV) are compositionally biased toward polar residues.

The protein belongs to the major facilitator superfamily. Phosphate:H(+) symporter (TC 2.A.1.9) family.

The protein localises to the cell membrane. The enzyme catalyses phosphate(in) + H(+)(in) = phosphate(out) + H(+)(out). Its function is as follows. Low-affinity transporter for external inorganic phosphate (Pi) that may be involved in the acquisition of phosphate released by arbuscular mycorrhizal (AM) fungi (e.g. Glomus versiforme and G.intraradices) during AM symbiosis; not required for mycorrhizal arbuscule development. This is Low affinity inorganic phosphate transporter 8 from Medicago truncatula (Barrel medic).